The following is a 186-amino-acid chain: 19 kDa globulin (186 aa).

A signal peptide spans 1-22 (MASKVVFFAAALMAAMVAISGA). A disordered region spans residues 108–155 (PLEQGWSSSSSEYYGGEGSSSEQGYYGEGSSEEGYYGEQQQQPGMTRV). A compositionally biased stretch (low complexity) spans 110–149 (EQGWSSSSSEYYGGEGSSSEQGYYGEGSSEEGYYGEQQQQ).

The protein belongs to the 2S seed storage albumins family.

The protein localises to the secreted. Functionally, seed storage protein. In Oryza sativa subsp. japonica (Rice), this protein is 19 kDa globulin.